The primary structure comprises 396 residues: Elongation factor Tu (396 aa).

Positions 10–206 (KPHVNIGTIG…AVDEYIPDPV (197 aa)) constitute a tr-type G domain. The segment at 19-26 (GHVDHGKT) is G1. 19–26 (GHVDHGKT) is a binding site for GTP. Residue T26 coordinates Mg(2+). Positions 62-66 (GITIN) are G2. The segment at 83–86 (DAPG) is G3. GTP is bound by residues 83–87 (DAPGH) and 138–141 (NKSD). The interval 138 to 141 (NKSD) is G4. The tract at residues 176–178 (SGL) is G5.

The protein belongs to the TRAFAC class translation factor GTPase superfamily. Classic translation factor GTPase family. EF-Tu/EF-1A subfamily. Monomer.

The protein localises to the cytoplasm. It catalyses the reaction GTP + H2O = GDP + phosphate + H(+). In terms of biological role, GTP hydrolase that promotes the GTP-dependent binding of aminoacyl-tRNA to the A-site of ribosomes during protein biosynthesis. This chain is Elongation factor Tu, found in Micrococcus luteus (strain ATCC 4698 / DSM 20030 / JCM 1464 / CCM 169 / CCUG 5858 / IAM 1056 / NBRC 3333 / NCIMB 9278 / NCTC 2665 / VKM Ac-2230) (Micrococcus lysodeikticus).